The primary structure comprises 335 residues: Trans-3-hydroxy-L-proline dehydratase (335 aa).

Residue cysteine 91 is the Proton acceptor of the active site. Residues 92 to 93 (GH), aspartate 251, and 256 to 257 (GS) each bind substrate.

It belongs to the proline racemase family.

The enzyme catalyses trans-3-hydroxy-L-proline = 1-pyrroline-2-carboxylate + H2O. Functionally, catalyzes the dehydration of trans-3-hydroxy-L-proline (t3LHyp) to Delta(1)-pyrroline-2-carboxylate (Pyr2C). Is likely involved in a degradation pathway that converts t3LHyp to L-proline. Displays neither trans-4-hydroxy-L-proline (t4LHyp) epimerase nor proline racemase activity. This is Trans-3-hydroxy-L-proline dehydratase from Burkholderia ambifaria (strain ATCC BAA-244 / DSM 16087 / CCUG 44356 / LMG 19182 / AMMD) (Burkholderia cepacia (strain AMMD)).